Consider the following 337-residue polypeptide: MRVLGIETSCDETGIAIYDDKKGLLANQLYSQVKLHADYGGVVPELASRDHVRKTVPLIQAALKEAGLTASDIDAVAYTAGPGLVGALLVGATVGRSLAFAWTVPAIPVHHMEGHLLAPMLEDNPPDFPFVALLVSGGHTQLISVTGIGQYELLGESIDDAAGEAFDKTAKLLGLDYPGGPMLSKMASQGTAGRFVFPRPMTDRPGLDFSFSGLKTFAANTIRSNGDDEQTRADIARAFEDAVVDTLMIKCKRALESTGFKRLVMAGGVSANRTLRAKLAEMMQKRRGEVFYARPEFCTDNGAMIAYAGMVRFKAGVTADLGVTVRPRWPLAELPAA.

The Fe cation site is built by His-111 and His-115. Residues 134 to 138 (LVSGG), Asp-167, Gly-180, and Asn-272 contribute to the substrate site. Asp-300 serves as a coordination point for Fe cation.

The protein belongs to the KAE1 / TsaD family. Requires Fe(2+) as cofactor.

The protein resides in the cytoplasm. It catalyses the reaction L-threonylcarbamoyladenylate + adenosine(37) in tRNA = N(6)-L-threonylcarbamoyladenosine(37) in tRNA + AMP + H(+). In terms of biological role, required for the formation of a threonylcarbamoyl group on adenosine at position 37 (t(6)A37) in tRNAs that read codons beginning with adenine. Is involved in the transfer of the threonylcarbamoyl moiety of threonylcarbamoyl-AMP (TC-AMP) to the N6 group of A37, together with TsaE and TsaB. TsaD likely plays a direct catalytic role in this reaction. This chain is tRNA N6-adenosine threonylcarbamoyltransferase, found in Salmonella schwarzengrund (strain CVM19633).